The sequence spans 247 residues: Probable transcriptional regulatory protein BHWA1_01533 (247 aa).

A disordered region spans residues 1–22 (MSGHSKWASIKHKKAANDSKKG).

Belongs to the TACO1 family.

The protein localises to the cytoplasm. This is Probable transcriptional regulatory protein BHWA1_01533 from Brachyspira hyodysenteriae (strain ATCC 49526 / WA1).